A 513-amino-acid polypeptide reads, in one-letter code: Cytochrome P450 1A2 (513 aa).

O-linked (GlcNAc) serine glycosylation occurs at Ser68. A substrate-binding site is contributed by Phe225. Cys456 is a binding site for heme.

The protein belongs to the cytochrome P450 family. In terms of assembly, interacts with PGRMC1; the interaction requires PGRMC1 homodimerization. Requires heme as cofactor.

It is found in the endoplasmic reticulum membrane. It localises to the microsome membrane. The catalysed reaction is an organic molecule + reduced [NADPH--hemoprotein reductase] + O2 = an alcohol + oxidized [NADPH--hemoprotein reductase] + H2O + H(+). The enzyme catalyses 17beta-estradiol + reduced [NADPH--hemoprotein reductase] + O2 = 2-hydroxy-17beta-estradiol + oxidized [NADPH--hemoprotein reductase] + H2O + H(+). It carries out the reaction 17beta-estradiol + reduced [NADPH--hemoprotein reductase] + O2 = 4-hydroxy-17beta-estradiol + oxidized [NADPH--hemoprotein reductase] + H2O + H(+). It catalyses the reaction estrone + reduced [NADPH--hemoprotein reductase] + O2 = 2-hydroxyestrone + oxidized [NADPH--hemoprotein reductase] + H2O + H(+). The catalysed reaction is estrone + reduced [NADPH--hemoprotein reductase] + O2 = 4-hydroxyestrone + oxidized [NADPH--hemoprotein reductase] + H2O + H(+). The enzyme catalyses cholesterol + reduced [NADPH--hemoprotein reductase] + O2 = 25-hydroxycholesterol + oxidized [NADPH--hemoprotein reductase] + H2O + H(+). It carries out the reaction all-trans-retinol + reduced [NADPH--hemoprotein reductase] + O2 = all-trans-retinal + oxidized [NADPH--hemoprotein reductase] + 2 H2O + H(+). It catalyses the reaction all-trans-retinal + reduced [NADPH--hemoprotein reductase] + O2 = all-trans-retinoate + oxidized [NADPH--hemoprotein reductase] + H2O + 2 H(+). The catalysed reaction is (5Z,8Z,11Z,14Z)-eicosatetraenoate + reduced [NADPH--hemoprotein reductase] + O2 = (14R,15S)-epoxy-(5Z,8Z,11Z)-eicosatrienoate + oxidized [NADPH--hemoprotein reductase] + H2O + H(+). The enzyme catalyses (5Z,8Z,11Z,14Z)-eicosatetraenoate + reduced [NADPH--hemoprotein reductase] + O2 = (14S,15R)-epoxy-(5Z,8Z,11Z)-eicosatrienoate + oxidized [NADPH--hemoprotein reductase] + H2O + H(+). It carries out the reaction (5Z,8Z,11Z,14Z,17Z)-eicosapentaenoate + reduced [NADPH--hemoprotein reductase] + O2 = (17R,18S)-epoxy-(5Z,8Z,11Z,14Z)-eicosatetraenoate + oxidized [NADPH--hemoprotein reductase] + H2O + H(+). It catalyses the reaction (4Z,7Z,10Z,13Z,16Z,19Z)-docosahexaenoate + reduced [NADPH--hemoprotein reductase] + O2 = (19R,20S)-epoxy-(4Z,7Z,10Z,13Z,16Z)-docosapentaenoate + oxidized [NADPH--hemoprotein reductase] + H2O + H(+). The catalysed reaction is (5S)-hydroperoxy-(6E,8Z,11Z,14Z)-eicosatetraenoate = 5-oxo-(6E,8Z,11Z,14Z)-eicosatetraenoate + H2O. The enzyme catalyses (12S)-hydroperoxy-(5Z,8Z,10E,14Z)-eicosatetraenoate = 12-oxo-(5Z,8Z,10E,14Z)-eicosatetraenoate + H2O. It carries out the reaction (15S)-hydroperoxy-(5Z,8Z,11Z,13E)-eicosatetraenoate = 15-oxo-(5Z,8Z,11Z,13E)-eicosatetraenoate + H2O. It catalyses the reaction (13S)-hydroperoxy-(9Z,11E)-octadecadienoate = 13-oxo-(9Z,11E)-octadecadienoate + H2O. The catalysed reaction is (5Z,8Z,11Z,14Z)-eicosatetraenoate + reduced [NADPH--hemoprotein reductase] + O2 = 13-hydroxy-(5Z,8Z,11Z,14Z)-eicosatetraenoate + oxidized [NADPH--hemoprotein reductase] + H2O + H(+). The enzyme catalyses (5Z,8Z,11Z,14Z)-eicosatetraenoate + reduced [NADPH--hemoprotein reductase] + O2 = 19-hydroxy-(5Z,8Z,11Z,14Z)-eicosatetraenoate + oxidized [NADPH--hemoprotein reductase] + H2O + H(+). It carries out the reaction (9Z,12Z)-octadecadienoate + reduced [NADPH--hemoprotein reductase] + O2 = 11-hydroxy-(9Z,12Z)-octadecadienoate + oxidized [NADPH--hemoprotein reductase] + H2O + H(+). It participates in cofactor metabolism; retinol metabolism. The protein operates within steroid metabolism; cholesterol metabolism. It functions in the pathway lipid metabolism; arachidonate metabolism. Its function is as follows. A cytochrome P450 monooxygenase involved in the metabolism of various endogenous substrates, including fatty acids, steroid hormones and vitamins. Mechanistically, uses molecular oxygen inserting one oxygen atom into a substrate, and reducing the second into a water molecule, with two electrons provided by NADPH via cytochrome P450 reductase (NADPH--hemoprotein reductase). Catalyzes the hydroxylation of carbon-hydrogen bonds. Exhibits high catalytic activity for the formation of hydroxyestrogens from estrone (E1) and 17beta-estradiol (E2), namely 2-hydroxy E1 and E2. Metabolizes cholesterol toward 25-hydroxycholesterol, a physiological regulator of cellular cholesterol homeostasis. May act as a major enzyme for all-trans retinoic acid biosynthesis in the liver. Catalyzes two successive oxidative transformation of all-trans retinol to all-trans retinal and then to the active form all-trans retinoic acid. Primarily catalyzes stereoselective epoxidation of the last double bond of polyunsaturated fatty acids (PUFA), displaying a strong preference for the (R,S) stereoisomer. Catalyzes bisallylic hydroxylation and omega-1 hydroxylation of PUFA. May also participate in eicosanoids metabolism by converting hydroperoxide species into oxo metabolites (lipoxygenase-like reaction, NADPH-independent). Plays a role in the oxidative metabolism of xenobiotics. Catalyzes the N-hydroxylation of heterocyclic amines and the O-deethylation of phenacetin. Metabolizes caffeine via N3-demethylation. The chain is Cytochrome P450 1A2 (Cyp1a2) from Mus musculus (Mouse).